A 250-amino-acid polypeptide reads, in one-letter code: UDP-2,3-diacylglucosamine hydrolase (250 aa).

Mn(2+) is bound by residues Asp7, His9, Asp40, Asn78, and His113. Residue 78–79 (NR) coordinates substrate. Substrate contacts are provided by Asp121, Ser159, Thr163, Lys166, and His194. His194 and His196 together coordinate Mn(2+).

The protein belongs to the LpxH family. The cofactor is Mn(2+).

It localises to the cell inner membrane. The catalysed reaction is UDP-2-N,3-O-bis[(3R)-3-hydroxytetradecanoyl]-alpha-D-glucosamine + H2O = 2-N,3-O-bis[(3R)-3-hydroxytetradecanoyl]-alpha-D-glucosaminyl 1-phosphate + UMP + 2 H(+). Its pathway is glycolipid biosynthesis; lipid IV(A) biosynthesis; lipid IV(A) from (3R)-3-hydroxytetradecanoyl-[acyl-carrier-protein] and UDP-N-acetyl-alpha-D-glucosamine: step 4/6. Hydrolyzes the pyrophosphate bond of UDP-2,3-diacylglucosamine to yield 2,3-diacylglucosamine 1-phosphate (lipid X) and UMP by catalyzing the attack of water at the alpha-P atom. Involved in the biosynthesis of lipid A, a phosphorylated glycolipid that anchors the lipopolysaccharide to the outer membrane of the cell. This is UDP-2,3-diacylglucosamine hydrolase from Pseudomonas fluorescens (strain ATCC BAA-477 / NRRL B-23932 / Pf-5).